We begin with the raw amino-acid sequence, 275 residues long: MVRKIAIYGKGGIGKSTTQQNTAAAMSYFHGKNVMIHGCDPKADSTRLILGGKMQTTMMDTLRELGEGACTPDKVIETGFGGIRCVESGGPEPGVGCAGRGVITAITLMERHGVYENDLDFVFFDVLGDVVCGGFAMPVRDGKAEEIYIVASGEMMALYAANNICRGMVKYARQSGVRLGGIICNSRNVDGERELLEEFCERIGTQMIHFVPRDNIVQKAEFNKKSVIEFDPECNQSQEYRELARKIIENTDFVIPEPMTMDEMEDLVVKYGVLD.

9-16 lines the ATP pocket; it reads GKGGIGKS. Cys97 contacts [4Fe-4S] cluster. Arg100 carries the post-translational modification ADP-ribosylarginine; by dinitrogenase reductase ADP-ribosyltransferase. Cys132 is a [4Fe-4S] cluster binding site.

The protein belongs to the NifH/BchL/ChlL family. In terms of assembly, homodimer. [4Fe-4S] cluster is required as a cofactor. In terms of processing, the reversible ADP-ribosylation of Arg-100 inactivates the nitrogenase reductase and regulates nitrogenase activity.

It carries out the reaction N2 + 8 reduced [2Fe-2S]-[ferredoxin] + 16 ATP + 16 H2O = H2 + 8 oxidized [2Fe-2S]-[ferredoxin] + 2 NH4(+) + 16 ADP + 16 phosphate + 6 H(+). The key enzymatic reactions in nitrogen fixation are catalyzed by the nitrogenase complex, which has 2 components: the iron protein and the molybdenum-iron protein. The protein is Nitrogenase iron protein 1 (nifH1) of Methanothermobacter marburgensis (strain ATCC BAA-927 / DSM 2133 / JCM 14651 / NBRC 100331 / OCM 82 / Marburg) (Methanobacterium thermoautotrophicum).